A 366-amino-acid polypeptide reads, in one-letter code: MSDAPLILLAAGGTGGHLFPAEALGVVLMKRGLRVRLVTDSRAMRYSGLFSADMIDVVPSETVRGRTPWALARTGLMLGAGTAKALALMLRLKPAAVVGFGGYPTLPPLFAARALRIPTLIHDSNAVMGRANRLLSKGVTAIATSLPGVLDRDPTLSAKTTTTGTPMRPAILAAAAVPFAPLAAEGPLRLLVVGGSQGARVMADIVPGAIEQLDPALQPRLVLTQQVREEDMARVRAVYDRLKITCELAPFFNDLPARLAASQLVVSRSGAGTVAELAAIGRPSILVPLPGALDQDQFANAGVLADAGGAIRIVQADFTPERLADEIAALAADPQKLTAMVTAARTVGRLDAADRLADLVVKVANI.

Residues 14 to 16 (TGG), Asn125, Arg168, Ser196, and Gln297 each bind UDP-N-acetyl-alpha-D-glucosamine.

It belongs to the glycosyltransferase 28 family. MurG subfamily.

It is found in the cell inner membrane. The enzyme catalyses di-trans,octa-cis-undecaprenyl diphospho-N-acetyl-alpha-D-muramoyl-L-alanyl-D-glutamyl-meso-2,6-diaminopimeloyl-D-alanyl-D-alanine + UDP-N-acetyl-alpha-D-glucosamine = di-trans,octa-cis-undecaprenyl diphospho-[N-acetyl-alpha-D-glucosaminyl-(1-&gt;4)]-N-acetyl-alpha-D-muramoyl-L-alanyl-D-glutamyl-meso-2,6-diaminopimeloyl-D-alanyl-D-alanine + UDP + H(+). It functions in the pathway cell wall biogenesis; peptidoglycan biosynthesis. Functionally, cell wall formation. Catalyzes the transfer of a GlcNAc subunit on undecaprenyl-pyrophosphoryl-MurNAc-pentapeptide (lipid intermediate I) to form undecaprenyl-pyrophosphoryl-MurNAc-(pentapeptide)GlcNAc (lipid intermediate II). The protein is UDP-N-acetylglucosamine--N-acetylmuramyl-(pentapeptide) pyrophosphoryl-undecaprenol N-acetylglucosamine transferase of Rhodopseudomonas palustris (strain HaA2).